A 243-amino-acid polypeptide reads, in one-letter code: Pyrimidodiazepine synthase (243 aa).

The 83-residue stretch at 20 to 102 (GILRLYSMRF…YLDEQYPLRP (83 aa)) folds into the GST N-terminal domain. Cys-30 serves as the catalytic Nucleophile. Glutathione contacts are provided by residues Lys-57, Val-70, and 86 to 87 (ES). Residues 107-230 (DPLKKVQDKL…VQAEFLRTRS (124 aa)) form the GST C-terminal domain.

Belongs to the GST superfamily. Omega family. As to quaternary structure, homodimer.

The catalysed reaction is 2-amino-6-acetyl-3,7,8,9-tetrahydro-3H-pyrimido[4,5-b][1,4]diazepin-4-one + glutathione disulfide + H2O = 6-pyruvoyl-5,6,7,8-tetrahydropterin + 2 glutathione. Functionally, mediates the conversion of 2-amino-4-oxo-6-pyruvoyl-5,6,7,8-tetrahydropteridine (6-PTP; also named 6-pyruvoyltetrahydropterin) to 2-amino-6-acetyl-3,7,8,9-tetrahydro-3H-pyrimido(4,5-b)[1,4]diazepin-4-one (pyrimidodiazepine or PDA), a key intermediate in red eye pigment drosopterin biosynthesis. This Drosophila melanogaster (Fruit fly) protein is Pyrimidodiazepine synthase.